The primary structure comprises 339 residues: Ketol-acid reductoisomerase (NADP(+)) (339 aa).

Positions 1 to 182 (MRVYYDRDAD…GGGRSGVIET (182 aa)) constitute a KARI N-terminal Rossmann domain. Residues 24 to 27 (YGSQ), Arg48, Ser51, Thr53, and 83 to 86 (DELQ) contribute to the NADP(+) site. His108 is a catalytic residue. NADP(+) is bound at residue Gly134. The KARI C-terminal knotted domain maps to 183 to 328 (TFKEECETDL…GKLRAMMPWI (146 aa)). The Mg(2+) site is built by Asp191, Glu195, Glu227, and Glu231. Ser252 provides a ligand contact to substrate.

It belongs to the ketol-acid reductoisomerase family. It depends on Mg(2+) as a cofactor.

The catalysed reaction is (2R)-2,3-dihydroxy-3-methylbutanoate + NADP(+) = (2S)-2-acetolactate + NADPH + H(+). It catalyses the reaction (2R,3R)-2,3-dihydroxy-3-methylpentanoate + NADP(+) = (S)-2-ethyl-2-hydroxy-3-oxobutanoate + NADPH + H(+). Its pathway is amino-acid biosynthesis; L-isoleucine biosynthesis; L-isoleucine from 2-oxobutanoate: step 2/4. It functions in the pathway amino-acid biosynthesis; L-valine biosynthesis; L-valine from pyruvate: step 2/4. Functionally, involved in the biosynthesis of branched-chain amino acids (BCAA). Catalyzes an alkyl-migration followed by a ketol-acid reduction of (S)-2-acetolactate (S2AL) to yield (R)-2,3-dihydroxy-isovalerate. In the isomerase reaction, S2AL is rearranged via a Mg-dependent methyl migration to produce 3-hydroxy-3-methyl-2-ketobutyrate (HMKB). In the reductase reaction, this 2-ketoacid undergoes a metal-dependent reduction by NADPH to yield (R)-2,3-dihydroxy-isovalerate. The chain is Ketol-acid reductoisomerase (NADP(+)) from Brucella melitensis biotype 2 (strain ATCC 23457).